Reading from the N-terminus, the 251-residue chain is Ditrans,polycis-undecaprenyl-diphosphate synthase ((2E,6E)-farnesyl-diphosphate specific) (251 aa).

The active site involves Asp-20. Asp-20 is a Mg(2+) binding site. Residues 21 to 24 (GNGR), Trp-25, Arg-33, His-37, and 65 to 67 (SSE) contribute to the substrate site. Asn-68 serves as the catalytic Proton acceptor. Substrate-binding positions include Trp-69, Arg-71, Arg-188, and 194-196 (RIS). Glu-207 contributes to the Mg(2+) binding site.

The protein belongs to the UPP synthase family. As to quaternary structure, homodimer. It depends on Mg(2+) as a cofactor.

It catalyses the reaction 8 isopentenyl diphosphate + (2E,6E)-farnesyl diphosphate = di-trans,octa-cis-undecaprenyl diphosphate + 8 diphosphate. Functionally, catalyzes the sequential condensation of isopentenyl diphosphate (IPP) with (2E,6E)-farnesyl diphosphate (E,E-FPP) to yield (2Z,6Z,10Z,14Z,18Z,22Z,26Z,30Z,34E,38E)-undecaprenyl diphosphate (di-trans,octa-cis-UPP). UPP is the precursor of glycosyl carrier lipid in the biosynthesis of bacterial cell wall polysaccharide components such as peptidoglycan and lipopolysaccharide. This is Ditrans,polycis-undecaprenyl-diphosphate synthase ((2E,6E)-farnesyl-diphosphate specific) from Vibrio vulnificus (strain CMCP6).